The following is a 140-amino-acid chain: Histone H2B (140 aa).

Residues 1–10 (MPPKAAEKKP) are compositionally biased toward basic and acidic residues. Positions 1–48 (MPPKAAEKKPSTGGKAPAGKAPAEKKEAGKKTAAAATGDKKKRGKTRK) are disordered. Residues lysine 8 and lysine 9 each carry the N6-acetyllysine; alternate modification. Glycyl lysine isopeptide (Lys-Gly) (interchain with G-Cter in SUMO); alternate cross-links involve residues lysine 8 and lysine 9. The segment covering 11–21 (STGGKAPAGKA) has biased composition (low complexity). Position 15 is an N6-acetyllysine (lysine 15). Residue lysine 25 is modified to N6-acetyllysine; alternate. Lysine 25 participates in a covalent cross-link: Glycyl lysine isopeptide (Lys-Gly) (interchain with G-Cter in SUMO); alternate. Residue lysine 26 forms a Glycyl lysine isopeptide (Lys-Gly) (interchain with G-Cter in SUMO) linkage. Residue lysine 134 forms a Glycyl lysine isopeptide (Lys-Gly) (interchain with G-Cter in ubiquitin) linkage.

Belongs to the histone H2B family. The nucleosome is a histone octamer containing two molecules each of H2A, H2B, H3 and H4 assembled in one H3-H4 heterotetramer and two H2A-H2B heterodimers. The octamer wraps approximately 147 bp of DNA. Monoubiquitinated by the ubc2-bre1 complex to form H2BK123ub1. H2BK123ub1 gives a specific tag for epigenetic transcriptional activation and is also prerequisite for H3K4me and H3K79me formation. H2BK123ub1 also modulates the formation of double-strand breaks during meiosis and is a prerequisite for DNA-damage checkpoint activation. In terms of processing, acetylated by gcn5 to form H2BK11ac and H2BK16ac. H2BK16ac can also be formed by esa1. Acetylation of N-terminal lysines and particularly formation of H2BK11acK16ac has a positive effect on transcription. Post-translationally, sumoylation to form H2BK6su or H2BK7su, and probably also H2BK16su or H2BK17su, occurs preferentially near the telomeres and represses gene transcription.

The protein resides in the nucleus. Its subcellular location is the chromosome. Core component of nucleosome. Nucleosomes wrap and compact DNA into chromatin, limiting DNA accessibility to the cellular machineries which require DNA as a template. Histones thereby play a central role in transcription regulation, DNA repair, DNA replication and chromosomal stability. DNA accessibility is regulated via a complex set of post-translational modifications of histones, also called histone code, and nucleosome remodeling. This chain is Histone H2B (htb1), found in Neosartorya fischeri (strain ATCC 1020 / DSM 3700 / CBS 544.65 / FGSC A1164 / JCM 1740 / NRRL 181 / WB 181) (Aspergillus fischerianus).